The chain runs to 221 residues: NAD(P)H-hydrate epimerase (221 aa).

The YjeF N-terminal domain maps to 10-211 (MQQYDQYTIN…DIGIYSPAEL (202 aa)). A (6S)-NADPHX-binding site is contributed by 58-62 (NNGGD). Asparagine 59 and aspartate 121 together coordinate K(+). (6S)-NADPHX is bound by residues 125 to 131 (GIGLSKP) and aspartate 154. Position 157 (serine 157) interacts with K(+).

It belongs to the NnrE/AIBP family. The cofactor is K(+).

It catalyses the reaction (6R)-NADHX = (6S)-NADHX. The enzyme catalyses (6R)-NADPHX = (6S)-NADPHX. In terms of biological role, catalyzes the epimerization of the S- and R-forms of NAD(P)HX, a damaged form of NAD(P)H that is a result of enzymatic or heat-dependent hydration. This is a prerequisite for the S-specific NAD(P)H-hydrate dehydratase to allow the repair of both epimers of NAD(P)HX. The sequence is that of NAD(P)H-hydrate epimerase from Weissella koreensis (strain KACC 15510).